We begin with the raw amino-acid sequence, 99 residues long: Large ribosomal subunit protein bL28 (99 aa).

It belongs to the bacterial ribosomal protein bL28 family.

This chain is Large ribosomal subunit protein bL28, found in Brucella anthropi (strain ATCC 49188 / DSM 6882 / CCUG 24695 / JCM 21032 / LMG 3331 / NBRC 15819 / NCTC 12168 / Alc 37) (Ochrobactrum anthropi).